A 132-amino-acid polypeptide reads, in one-letter code: Small ribosomal subunit protein uS8 (132 aa).

The protein belongs to the universal ribosomal protein uS8 family. In terms of assembly, part of the 30S ribosomal subunit. Contacts proteins S5 and S12.

In terms of biological role, one of the primary rRNA binding proteins, it binds directly to 16S rRNA central domain where it helps coordinate assembly of the platform of the 30S subunit. In Thermoanaerobacter pseudethanolicus (strain ATCC 33223 / 39E) (Clostridium thermohydrosulfuricum), this protein is Small ribosomal subunit protein uS8.